The chain runs to 281 residues: GPN-loop GTPase 3 (281 aa).

13 to 18 (GSGKST) contacts GTP. The Gly-Pro-Asn (GPN)-loop; involved in dimer interface signature appears at 70–72 (GPN). GTP is bound at residue 173–176 (SKMD). The tract at residues 259 to 281 (VQYGEDEEPKEPKDMDEGDFTAQ) is disordered.

It belongs to the GPN-loop GTPase family. As to quaternary structure, heterodimers with GPN1 or GPN2. Binds to RNA polymerase II (RNAPII).

In terms of biological role, small GTPase required for proper nuclear import of RNA polymerase II and III (RNAPII and RNAPIII). May act at an RNAP assembly step prior to nuclear import. The protein is GPN-loop GTPase 3 of Mycosarcoma maydis (Corn smut fungus).